A 72-amino-acid polypeptide reads, in one-letter code: MSQYDHNQSAGANPPPPMSTCTSPPPPIGYPTNQPSHGSVAQGKVETKSKGDGFFKGCLAAMCCCCALDICF.

The segment covering 1–11 (MSQYDHNQSAG) has biased composition (polar residues). A disordered region spans residues 1 to 46 (MSQYDHNQSAGANPPPPMSTCTSPPPPIGYPTNQPSHGSVAQGKVE). Positions 13–29 (NPPPPMSTCTSPPPPIG) are enriched in pro residues. A helical membrane pass occupies residues 49–65 (SKGDGFFKGCLAAMCCC).

Belongs to the CYSTM1 family. In terms of assembly, heterodimers. Binds weakly to CYSTM7 and WIH1/CYSTM13. Mostly expressed in roots, flowers and siliques and, to a lower extent, in stems and leaves.

The protein resides in the cell membrane. The protein localises to the nucleus. In terms of biological role, may be involved in aluminium (Al) tolerance. Involved in resistance to abiotic stress. The polypeptide is Protein CYSTEINE-RICH TRANSMEMBRANE MODULE 1 (Arabidopsis thaliana (Mouse-ear cress)).